Here is a 253-residue protein sequence, read N- to C-terminus: 28 kDa inner dynein arm light chain, axonemal (253 aa).

Positions threonine 19 to proline 44 are disordered. Residues isoleucine 160–valine 239 are a coiled coil.

This sequence belongs to the inner dynein arm light chain family.

Its subcellular location is the cytoplasm. It localises to the cytoskeleton. It is found in the flagellum axoneme. Plays a dynamic role in flagellar motility. May be necessary for stable assembly of a subset of inner dynein arms or for the binding of these arms to the outer doublet microtubules of the axoneme. The sequence is that of 28 kDa inner dynein arm light chain, axonemal (IDA4) from Chlamydomonas reinhardtii (Chlamydomonas smithii).